We begin with the raw amino-acid sequence, 403 residues long: Succinoglycan biosynthesis protein ExoL (403 aa).

Its subcellular location is the cytoplasm. It participates in glycan metabolism; exopolysaccharide biosynthesis. Functionally, essential for succinoglycan (EPS I) synthesis and nodule infection. Glycosyltransferase needed for the addition of the third sugar (glucose), catalyzes the formation of a beta-1,4 linkage between the second and third sugars. The protein is Succinoglycan biosynthesis protein ExoL (exoL) of Rhizobium meliloti (strain 1021) (Ensifer meliloti).